The primary structure comprises 462 residues: Acetyl-CoA decarbonylase/synthase complex subunit gamma (462 aa).

Residues M1 to P60 form the 4Fe-4S domain. [4Fe-4S] cluster contacts are provided by C18, C21, C26, and C43.

In terms of assembly, heterodimer of delta and gamma chains. The ACDS complex is made up of alpha, epsilon, beta, gamma and delta chains with a probable stoichiometry of (alpha(2)epsilon(2))(4)-beta(8)-(gamma(1)delta(1))(8). Requires corrinoid as cofactor. [4Fe-4S] cluster serves as cofactor.

The enzyme catalyses 5,6,7,8-tetrahydrosarcinapterin + methyl-Co(III)-[corrinoid Fe-S protein] = 5-methyltetrahydrosarcinapterin + Co(I)-[corrinoid Fe-S protein] + H(+). Part of a complex that catalyzes the reversible cleavage of acetyl-CoA, allowing autotrophic growth from CO(2). The chain is Acetyl-CoA decarbonylase/synthase complex subunit gamma from Methanopyrus kandleri (strain AV19 / DSM 6324 / JCM 9639 / NBRC 100938).